The sequence spans 784 residues: Kinesin-like protein Klp68D (784 aa).

The region spanning cysteine 19 to isoleucine 344 is the Kinesin motor domain. Residue glycine 106 to threonine 113 participates in ATP binding. A coiled-coil region spans residues asparagine 351–valine 385. Disordered regions lie at residues arginine 371–arginine 449, lysine 605–leucine 652, and isoleucine 742–lysine 784. Residues threonine 386–lysine 396 are compositionally biased toward basic residues. Acidic residues predominate over residues proline 416–serine 428. The stretch at alanine 426–phenylalanine 582 forms a coiled coil. Residues glutamate 429 to arginine 449 show a composition bias toward basic and acidic residues. The span at serine 622–arginine 634 shows a compositional bias: basic residues. Positions lysine 769–alanine 778 are enriched in low complexity.

Belongs to the TRAFAC class myosin-kinesin ATPase superfamily. Kinesin family. Kinesin II subfamily. As to expression, expressed primarily in the central nervous system and in a subset of the peripheral nervous system during embryogenesis.

The protein resides in the cytoplasm. Its subcellular location is the cytoskeleton. Functionally, plus-end directed microtubule motor that may be used for anterograde axonal transport and could conceivably move cargos in fly neurons different than those moved by kinesin heavy chain or other plus-end directed motors. The protein is Kinesin-like protein Klp68D (Klp68D) of Drosophila melanogaster (Fruit fly).